A 106-amino-acid chain; its full sequence is NADH dehydrogenase [ubiquinone] 1 beta subcomplex subunit 10-B (106 aa).

A disordered region spans residues 1–25 (MGRKKGLPEFEESAPDGFDPENPYK).

The protein belongs to the complex I NDUFB10 subunit family. Complex I is composed of at least 49 different subunits.

The protein resides in the mitochondrion inner membrane. In terms of biological role, accessory subunit of the mitochondrial membrane respiratory chain NADH dehydrogenase (Complex I), that is believed not to be involved in catalysis. Complex I functions in the transfer of electrons from NADH to the respiratory chain. The immediate electron acceptor for the enzyme is believed to be ubiquinone. In Arabidopsis thaliana (Mouse-ear cress), this protein is NADH dehydrogenase [ubiquinone] 1 beta subcomplex subunit 10-B.